Here is a 575-residue protein sequence, read N- to C-terminus: DNA mismatch repair protein MutL (575 aa).

Belongs to the DNA mismatch repair MutL/HexB family.

Functionally, this protein is involved in the repair of mismatches in DNA. It is required for dam-dependent methyl-directed DNA mismatch repair. May act as a 'molecular matchmaker', a protein that promotes the formation of a stable complex between two or more DNA-binding proteins in an ATP-dependent manner without itself being part of a final effector complex. This Coxiella burnetii (strain CbuG_Q212) (Coxiella burnetii (strain Q212)) protein is DNA mismatch repair protein MutL.